The sequence spans 297 residues: Tyrosine recombinase XerD (297 aa).

The 86-residue stretch at M1–M86 folds into the Core-binding (CB) domain. In terms of domain architecture, Tyr recombinase spans G107–K291. Catalysis depends on residues R147, K171, H243, R246, and H269. Catalysis depends on Y278, which acts as the O-(3'-phospho-DNA)-tyrosine intermediate.

It belongs to the 'phage' integrase family. XerD subfamily. In terms of assembly, forms a cyclic heterotetrameric complex composed of two molecules of XerC and two molecules of XerD.

The protein resides in the cytoplasm. Site-specific tyrosine recombinase, which acts by catalyzing the cutting and rejoining of the recombining DNA molecules. The XerC-XerD complex is essential to convert dimers of the bacterial chromosome into monomers to permit their segregation at cell division. It also contributes to the segregational stability of plasmids. This is Tyrosine recombinase XerD from Listeria monocytogenes serovar 1/2a (strain ATCC BAA-679 / EGD-e).